Consider the following 44-residue polypeptide: Defensin ARD1 (44 aa).

Cystine bridges form between Cys-7–Cys-32, Cys-18–Cys-40, and Cys-22–Cys-42.

The protein localises to the secreted. Its function is as follows. Possesses potent anti-fungal activity. In Archaeoprepona demophon (One-spotted leafwing butterfly), this protein is Defensin ARD1.